A 141-amino-acid chain; its full sequence is Hemoglobin subunit alpha-1 (141 aa).

The region spanning 1–141 (VLSPADKNNV…VSTVLTSKYR (141 aa)) is the Globin domain. Residue histidine 58 coordinates O2. Residue histidine 87 coordinates heme b.

This sequence belongs to the globin family. In terms of assembly, heterotetramer of two alpha chains and two beta chains. Red blood cells.

Involved in oxygen transport from the lung to the various peripheral tissues. The protein is Hemoglobin subunit alpha-1 of Varecia variegata (Black-and-white ruffed lemur).